Consider the following 391-residue polypeptide: MTSPVPRLIEQFERGLDAPICLTWELTYACNLACVHCLSSSGKRDPGELSTRQCKDIIDELERMQVFYVNIGGGEPTVRPDFWELVDYATAHHVGVKFSTNGVRITPEVATRLAATDYVDVQISLDGATAEVNDAIRGTGSFDMAVRALQNLAAAGFAGVKISVVITRRNVAQLDEFATLASRYGATLRITRLRPSGRGTDVWADLHPTADQQVQLYDWLVSKGERVLTGDSFFHLAPLGQSGALAGLNMCGAGRVVCLIDPVGDVYACPFAIHDHFLAGNVLSDGGFQNVWKNSSLFRELREPQSAGACGSCGHYDSCRGGCMAAKFFTGLPLDGPDPECVQGHSEPALARERHLPRPRADHSRGRRVSKPVPLTLSMRPPKRPCNESPV.

A Radical SAM core domain is found at 16-232 (LDAPICLTWE…KGERVLTGDS (217 aa)). 11 residues coordinate [4Fe-4S] cluster: Cys30, Cys34, Cys37, Cys251, Cys258, Cys269, Cys310, Cys313, Cys319, Cys323, and Cys341. The segment at 340 to 391 (ECVQGHSEPALARERHLPRPRADHSRGRRVSKPVPLTLSMRPPKRPCNESPV) is disordered. The span at 350-364 (LARERHLPRPRADHS) shows a compositional bias: basic and acidic residues.

It belongs to the radical SAM superfamily. Requires [4Fe-4S] cluster as cofactor.

It catalyses the reaction [mycofactocin precursor peptide]-C-terminal glycyl-L-valyl-L-tyrosine + S-adenosyl-L-methionine = [mycofactocin precursor peptide]-C-terminal glycyl-N-{[2-(4-hydroxyphenyl)ethenyl]-3-methylbutanamide} + 5'-deoxyadenosine + L-methionine + CO2. The enzyme catalyses [mycofactocin precursor peptide]-C-terminal glycyl-N-{[2-(4-hydroxyphenyl)ethenyl]-3-methylbutanamide} + AH2 + S-adenosyl-L-methionine = [mycofactocin precursor peptide]-C-terminal glycyl-N-{5-[(4-hydroxyphenyl)methyl]-4,4-dimethyl-2-oxopyrrolidin-3-yl}acetamide + 5'-deoxyadenosine + L-methionine + A + H(+). Functionally, radical S-adenosylmethionine (SAM) enzyme responsible for the first step of the biosynthesis of the enzyme cofactor mycofactocin (MFT). Catalyzes two reactions at the C-terminus of the mycofactocin precursor (the MftA peptide). The first one is the oxidative decarboxylation of the C-terminal L-tyrosine of MftA, forming an unsaturated tyramine moiety. The second reaction is the cross-linking of the tyramine with the penultimate L-valine residue, forming a five-membered lactam ring. Its activity requires the presence of the MftB chaperone. This is Mycofactocin maturase MftC (mftC) from Mycobacterium tuberculosis (strain CDC 1551 / Oshkosh).